The chain runs to 109 residues: Small ribosomal subunit protein uS17 (109 aa).

This sequence belongs to the universal ribosomal protein uS17 family. As to quaternary structure, part of the 30S ribosomal subunit.

Its function is as follows. One of the primary rRNA binding proteins, it binds specifically to the 5'-end of 16S ribosomal RNA. This chain is Small ribosomal subunit protein uS17, found in Methanococcus maripaludis (strain DSM 14266 / JCM 13030 / NBRC 101832 / S2 / LL).